A 312-amino-acid chain; its full sequence is MDLKNGSLVTEFILLGFFGRWELQIFFFVTFSLIYGATVMGNILIMVTVTCRSTLHSPLYFLLGNLSFLDMCLSTATTPKMIIDLLTDHKTISVWGCVTQMFFMHFFGGAEMTLLIIMAFDRYVAICKPLHYRTIMSHKLLKGFAILSWIIGFLHSISQIVLTMNLPFCGHNVINNIFCDLPLVIKLACIETYTLELFVIADSGLLSFTCFILLLVSYIVILVSVPKKSSHGLSKALSTLSAHIIVVTLFFGPCIFIYVWPFSSLASNKTLAVFYTVITPLLNPSIYTLRNKKMQEAIRKLRFQYVSSAQNF.

Residues 1–25 (MDLKNGSLVTEFILLGFFGRWELQI) are Extracellular-facing. N-linked (GlcNAc...) asparagine glycosylation is present at asparagine 5. A helical transmembrane segment spans residues 26-49 (FFFVTFSLIYGATVMGNILIMVTV). At 50 to 57 (TCRSTLHS) the chain is on the cytoplasmic side. Residues 58–79 (PLYFLLGNLSFLDMCLSTATTP) traverse the membrane as a helical segment. Topologically, residues 80–100 (KMIIDLLTDHKTISVWGCVTQ) are extracellular. A disulfide bridge links cysteine 97 with cysteine 189. The helical transmembrane segment at 101 to 120 (MFFMHFFGGAEMTLLIIMAF) threads the bilayer. At 121-139 (DRYVAICKPLHYRTIMSHK) the chain is on the cytoplasmic side. Residues 140–158 (LLKGFAILSWIIGFLHSIS) form a helical membrane-spanning segment. Over 159–195 (QIVLTMNLPFCGHNVINNIFCDLPLVIKLACIETYTL) the chain is Extracellular. Residues 196 to 219 (ELFVIADSGLLSFTCFILLLVSYI) form a helical membrane-spanning segment. Over 220–235 (VILVSVPKKSSHGLSK) the chain is Cytoplasmic. Residues 236–258 (ALSTLSAHIIVVTLFFGPCIFIY) traverse the membrane as a helical segment. Over 259–269 (VWPFSSLASNK) the chain is Extracellular. Asparagine 268 carries N-linked (GlcNAc...) asparagine glycosylation. A helical membrane pass occupies residues 270 to 289 (TLAVFYTVITPLLNPSIYTL). Over 290-312 (RNKKMQEAIRKLRFQYVSSAQNF) the chain is Cytoplasmic.

Belongs to the G-protein coupled receptor 1 family.

The protein resides in the cell membrane. Functionally, odorant receptor. This Homo sapiens (Human) protein is Olfactory receptor 4L1 (OR4L1).